A 58-amino-acid polypeptide reads, in one-letter code: uncharacterized protein (58 aa).

The helical transmembrane segment at 12–32 (VALVYISVYFFSCISLIVYFF) threads the bilayer.

It localises to the membrane. This is an uncharacterized protein from Saccharomyces cerevisiae (strain ATCC 204508 / S288c) (Baker's yeast).